A 315-amino-acid polypeptide reads, in one-letter code: MLKNKILATTLSVSLLAPLANPLLENAKAANDTEDIGKGSDIEIIKRTEDKTSNKWGVTQNIQFDFVKDKKYNKDALILKMQGFISSRTTYYNYKKTNHVKAMRWPFQYNIGLKTNDKYVSLINYLPKNKIESTNVSQTLGYNIGGNFQSAPSLGGNGSFNYSKSISYTQQNYVSEVEQQNSKSVLWGVKANSFATESGQKSAFDSDLFVGYKPHSKDPRDYFVPDSELPPLVQSGFNPSFIATVSHEKGSSDTSEFEITYGRNMDVTHAIKRSTHYGNSYLDGHRVHNAFVNRNYTVKYEVNWKTHEIKVKGQN.

Positions 1–29 (MLKNKILATTLSVSLLAPLANPLLENAKA) are cleaved as a signal peptide.

It belongs to the aerolysin family. In terms of assembly, toxicity requires sequential binding and synergistic association of a class S and a class F component which form heterooligomeric complexes. HlgC (class S) associates with HlgB (class F) thus forming an CB toxin.

Its function is as follows. Toxin that seems to act by forming pores in the membrane of the cell. Has a hemolytic and a leucotoxic activity. The protein is Gamma-hemolysin component C (hlgC) of Staphylococcus aureus (strain Mu50 / ATCC 700699).